We begin with the raw amino-acid sequence, 422 residues long: Serine--tRNA ligase (422 aa).

231-233 serves as a coordination point for L-serine; it reads TSE. An ATP-binding site is contributed by 262–264; the sequence is RQE. Residue glutamate 285 coordinates L-serine. Residue 349 to 352 participates in ATP binding; it reads EISS. Serine 384 is a binding site for L-serine.

It belongs to the class-II aminoacyl-tRNA synthetase family. Type-1 seryl-tRNA synthetase subfamily. Homodimer. The tRNA molecule binds across the dimer.

Its subcellular location is the cytoplasm. It carries out the reaction tRNA(Ser) + L-serine + ATP = L-seryl-tRNA(Ser) + AMP + diphosphate + H(+). It catalyses the reaction tRNA(Sec) + L-serine + ATP = L-seryl-tRNA(Sec) + AMP + diphosphate + H(+). It functions in the pathway aminoacyl-tRNA biosynthesis; selenocysteinyl-tRNA(Sec) biosynthesis; L-seryl-tRNA(Sec) from L-serine and tRNA(Sec): step 1/1. Its function is as follows. Catalyzes the attachment of serine to tRNA(Ser). Is also able to aminoacylate tRNA(Sec) with serine, to form the misacylated tRNA L-seryl-tRNA(Sec), which will be further converted into selenocysteinyl-tRNA(Sec). The protein is Serine--tRNA ligase of Mycoplasma capricolum subsp. capricolum (strain California kid / ATCC 27343 / NCTC 10154).